We begin with the raw amino-acid sequence, 192 residues long: Ciliary microtubule inner protein 3 (192 aa).

The segment at 24 to 108 (RAGAEGGPSL…SGQKVKAPHR (85 aa)) is disordered. Positions 55-64 (APRRPPRPRT) are enriched in basic residues.

It belongs to the CIMIP3-like family. Detected in the sperm flagellum (at protein level).

It is found in the cytoplasm. It localises to the cytoskeleton. The protein localises to the flagellum axoneme. In Bos taurus (Bovine), this protein is Ciliary microtubule inner protein 3.